The following is a 279-amino-acid chain: Probable autolysin LDP (279 aa).

The N-terminal stretch at 1-24 (MKKSLTVTVSSVLAFLALNNAAHA) is a signal peptide. The 44-residue stretch at 51 to 94 (TTYTVVAGDSLYKIALEHHLTLNQLYSYNPGVTPLIFPGDVISL) folds into the LysM domain. Residues 158–279 (VPTVPVAHNY…LNPGKYNYIH (122 aa)) enclose the Peptidase C51 domain.

It catalyses the reaction Hydrolyzes the link between N-acetylmuramoyl residues and L-amino acid residues in certain cell-wall glycopeptides.. Its function is as follows. Has weak lytic activity toward S.aureus cells. The sequence is that of Probable autolysin LDP from Staphylococcus aureus (strain NCTC 8325 / PS 47).